The primary structure comprises 564 residues: E3 ubiquitin-protein ligase RNF168 (564 aa).

An RING-type zinc finger spans residues 16-55 (CGICMEILVEPVTLPCNHTLCNPCFQSTVEKANLCCPFCR). Serine 70 is modified (phosphoserine). Residues 110–128 (LSKPGELRREYEEEISKVE) carry the LR motif 1 motif. Phosphoserine is present on serine 134. A UMI motif motif is present at residues 143–151 (EEYIQRLLA). Disordered stretches follow at residues 149–179 (LLAE…EELA) and 193–291 (NILA…QGPE). Residues 157-179 (EKRRTERRRSEMEEQLRGDEELA) are compositionally biased toward basic and acidic residues. The MIU motif 1 motif lies at 168–191 (MEEQLRGDEELARRLSTSINSNYE). Serine 197 bears the Phosphoserine mark. Residue lysine 210 forms a Glycyl lysine isopeptide (Lys-Gly) (interchain with G-Cter in SUMO2) linkage. The segment covering 242–259 (KTEHGEDMCKSKETDSSD) has biased composition (basic and acidic residues). Residues 275-288 (PTHSPQTCPETQGQ) show a composition bias toward polar residues. A phosphothreonine mark is found at threonine 348 and threonine 361. 2 positions are modified to phosphoserine: serine 413 and serine 414. The MIU motif 2 motif lies at 438–461 (RHKQEEQDRLLALQLQKEADKEKM). Residues 455-564 (EADKEKMVPN…QKSILQMFQR (110 aa)) form a disordered region. Residues 465-476 (RQKGSPDQYQLR) carry the LR motif 2 motif. A compositionally biased stretch (polar residues) spans 466 to 480 (QKGSPDQYQLRTSSP). At serine 469 the chain carries Phosphoserine. The span at 491-515 (NVKDRNSPKQTADRSKSQRSRKGEY) shows a compositional bias: basic and acidic residues. Composition is skewed to polar residues over residues 519–531 (FEST…NGTK) and 555–564 (QKSILQMFQR). Lysine 524 participates in a covalent cross-link: Glycyl lysine isopeptide (Lys-Gly) (interchain with G-Cter in SUMO2).

It belongs to the RNF168 family. In terms of assembly, monomer. Interacts with UBE2N/UBC13. Sumoylated with SUMO1 by PIAS4 in response to double-strand breaks (DSBs). Post-translationally, ubiquitinated.

It is found in the nucleus. The enzyme catalyses S-ubiquitinyl-[E2 ubiquitin-conjugating enzyme]-L-cysteine + [acceptor protein]-L-lysine = [E2 ubiquitin-conjugating enzyme]-L-cysteine + N(6)-ubiquitinyl-[acceptor protein]-L-lysine.. It participates in protein modification; protein ubiquitination. E3 ubiquitin-protein ligase required for accumulation of repair proteins to sites of DNA damage. Acts with UBE2N/UBC13 to amplify the RNF8-dependent histone ubiquitination. Recruited to sites of DNA damage at double-strand breaks (DSBs) by binding to ubiquitinated histone H2A and H2AX and amplifies the RNF8-dependent H2A ubiquitination, promoting the formation of 'Lys-63'-linked ubiquitin conjugates. This leads to concentrate ubiquitinated histones H2A and H2AX at DNA lesions to the threshold required for recruitment of TP53BP1 and BRCA1. Also recruited at DNA interstrand cross-links (ICLs) sites and promotes accumulation of 'Lys-63'-linked ubiquitination of histones H2A and H2AX, leading to recruitment of FAAP20 and Fanconi anemia (FA) complex, followed by interstrand cross-link repair. H2A ubiquitination also mediates the ATM-dependent transcriptional silencing at regions flanking DSBs in cis, a mechanism to avoid collision between transcription and repair intermediates. Also involved in class switch recombination in immune system, via its role in regulation of DSBs repair. Following DNA damage, promotes the ubiquitination and degradation of JMJD2A/KDM4A in collaboration with RNF8, leading to unmask H4K20me2 mark and promote the recruitment of TP53BP1 at DNA damage sites. Not able to initiate 'Lys-63'-linked ubiquitination in vitro; possibly due to partial occlusion of the UBE2N/UBC13-binding region. Catalyzes monoubiquitination of 'Lys-13' and 'Lys-15' of nucleosomal histone H2A (H2AK13Ub and H2AK15Ub, respectively). The protein is E3 ubiquitin-protein ligase RNF168 of Rattus norvegicus (Rat).